A 256-amino-acid polypeptide reads, in one-letter code: Transmembrane protein 74B (256 aa).

Positions 1 to 111 are disordered; it reads MPPAQGYEFA…LSLHSEEGPA (111 aa). The span at 80 to 96 shows a compositional bias: low complexity; the sequence is RLGSSPSPPGGVSSLPR. Over residues 97–108 the composition is skewed to basic and acidic residues; it reads SQRDDLSLHSEE. Transmembrane regions (helical) follow at residues 123-143 and 177-197; these read FVSA…AYAI and IIAG…LLMV.

The protein belongs to the TMEM74 family.

The protein resides in the membrane. In Homo sapiens (Human), this protein is Transmembrane protein 74B (TMEM74B).